Consider the following 516-residue polypeptide: Rho guanine nucleotide exchange factor 9 (516 aa).

The SH3 domain maps to 8–67 (DSIVSAEAVWDHVTMANRELAFKAGDVIKVLDASNKDWWWGQIDDEEGWFPASFVRLWVN). The interaction with GPHN stretch occupies residues 100 to 110 (RDQMRANVINE). The region spanning 103–287 (MRANVINEIM…RNVTQQINER (185 aa)) is the DH domain. The region spanning 318 to 425 (ELIYTGEMAW…WLRAFREERK (108 aa)) is the PH domain. Residues 450–480 (RKASKQKGVNSARSVPPSYPPPQDPLNQGQY) form a disordered region. Ser-502 bears the Phosphoserine mark.

As to quaternary structure, interacts with GPHN. Detected in embryonic and adult brain.

It is found in the cytoplasm. It localises to the postsynaptic density. Functionally, acts as a guanine nucleotide exchange factor (GEF) for CDC42. Promotes formation of GPHN clusters. The polypeptide is Rho guanine nucleotide exchange factor 9 (Arhgef9) (Mus musculus (Mouse)).